The following is a 183-amino-acid chain: Hypoxanthine/guanine phosphoribosyltransferase (183 aa).

This sequence belongs to the purine/pyrimidine phosphoribosyltransferase family. Archaeal HPRT subfamily. In terms of assembly, homodimer.

It localises to the cytoplasm. The catalysed reaction is IMP + diphosphate = hypoxanthine + 5-phospho-alpha-D-ribose 1-diphosphate. The enzyme catalyses GMP + diphosphate = guanine + 5-phospho-alpha-D-ribose 1-diphosphate. It participates in purine metabolism; IMP biosynthesis via salvage pathway; IMP from hypoxanthine: step 1/1. Its function is as follows. Catalyzes a salvage reaction resulting in the formation of IMP that is energically less costly than de novo synthesis. This is Hypoxanthine/guanine phosphoribosyltransferase from Methanocaldococcus jannaschii (strain ATCC 43067 / DSM 2661 / JAL-1 / JCM 10045 / NBRC 100440) (Methanococcus jannaschii).